The chain runs to 212 residues: MLYFESLKDKFKLNKKQLNKFVFYYEFLKKENQKMNLTSLISLSDVCYKHFYDSLILKEIFDFNNVTNLCDVGSGAGFPSFPLKILYPHLKIIIIESSLKKINFLKQLASHLELDNVCFFHKRVEQHDIAKNGSYDFVVARALARLEIILKWCVPLVKKRGYFIAMKGKNFQQELEASKKIIKQMKVKLVSAKVFELPMQLGTRTNLLFQTE.

S-adenosyl-L-methionine-binding positions include Gly73, Phe78, 96–98 (ESS), 124–125 (VE), and Arg141.

Belongs to the methyltransferase superfamily. RNA methyltransferase RsmG family.

Its subcellular location is the cytoplasm. Its function is as follows. Specifically methylates the N7 position of a guanine in 16S rRNA. The chain is Ribosomal RNA small subunit methyltransferase G from Aster yellows witches'-broom phytoplasma (strain AYWB).